The primary structure comprises 177 residues: Large ribosomal subunit protein uL6 (177 aa).

This sequence belongs to the universal ribosomal protein uL6 family. As to quaternary structure, part of the 50S ribosomal subunit.

In terms of biological role, this protein binds to the 23S rRNA, and is important in its secondary structure. It is located near the subunit interface in the base of the L7/L12 stalk, and near the tRNA binding site of the peptidyltransferase center. In Methylobacterium sp. (strain 4-46), this protein is Large ribosomal subunit protein uL6.